Reading from the N-terminus, the 318-residue chain is RNA polymerase II transcription factor B subunit 3 (318 aa).

The RING-type zinc finger occupies 13–54; it reads CPLCQADRYLNPNMKLLINPECYHKMCESCVDRIFTTGPAQC.

In terms of assembly, one of the nine subunits forming the core-TFIIH basal transcription factor. Also interacts with skp1 and with the mcs2-mcs6 complex.

The protein resides in the cytoplasm. Its subcellular location is the nucleus. Its function is as follows. Acts as a component of the general transcription and DNA repair factor IIH (TFIIH or factor B), which is essential for both basal and activated transcription, and is involved in nucleotide excision repair (NER) of damaged DNA. TFIIH has CTD kinase activity and DNA-dependent ATPase activity, and is essential for polymerase II transcription. The chain is RNA polymerase II transcription factor B subunit 3 (pmh1) from Schizosaccharomyces pombe (strain 972 / ATCC 24843) (Fission yeast).